The sequence spans 198 residues: Pyridoxal 5'-phosphate synthase subunit PdxT (198 aa).

49 to 51 (GES) serves as a coordination point for L-glutamine. The Nucleophile role is filled by Cys81. Residues Arg112 and 140–141 (IR) contribute to the L-glutamine site. Residues His176 and Glu178 each act as charge relay system in the active site.

It belongs to the glutaminase PdxT/SNO family. In the presence of PdxS, forms a dodecamer of heterodimers. Only shows activity in the heterodimer.

The enzyme catalyses aldehydo-D-ribose 5-phosphate + D-glyceraldehyde 3-phosphate + L-glutamine = pyridoxal 5'-phosphate + L-glutamate + phosphate + 3 H2O + H(+). It catalyses the reaction L-glutamine + H2O = L-glutamate + NH4(+). It functions in the pathway cofactor biosynthesis; pyridoxal 5'-phosphate biosynthesis. Catalyzes the hydrolysis of glutamine to glutamate and ammonia as part of the biosynthesis of pyridoxal 5'-phosphate. The resulting ammonia molecule is channeled to the active site of PdxS. This is Pyridoxal 5'-phosphate synthase subunit PdxT from Methanocella arvoryzae (strain DSM 22066 / NBRC 105507 / MRE50).